A 120-amino-acid chain; its full sequence is Aspartate 1-decarboxylase (120 aa).

Ser25 functions as the Schiff-base intermediate with substrate; via pyruvic acid in the catalytic mechanism. Ser25 is modified (pyruvic acid (Ser)). Thr57 contacts substrate. Tyr58 acts as the Proton donor in catalysis. 73–75 (GAA) contributes to the substrate binding site.

The protein belongs to the PanD family. Heterooctamer of four alpha and four beta subunits. The cofactor is pyruvate. In terms of processing, is synthesized initially as an inactive proenzyme, which is activated by self-cleavage at a specific serine bond to produce a beta-subunit with a hydroxyl group at its C-terminus and an alpha-subunit with a pyruvoyl group at its N-terminus.

It localises to the cytoplasm. The enzyme catalyses L-aspartate + H(+) = beta-alanine + CO2. Its pathway is cofactor biosynthesis; (R)-pantothenate biosynthesis; beta-alanine from L-aspartate: step 1/1. Catalyzes the pyruvoyl-dependent decarboxylation of aspartate to produce beta-alanine. The protein is Aspartate 1-decarboxylase of Cupriavidus necator (strain ATCC 17699 / DSM 428 / KCTC 22496 / NCIMB 10442 / H16 / Stanier 337) (Ralstonia eutropha).